The chain runs to 300 residues: Nucleotide-binding protein Daci_5422 (300 aa).

An ATP-binding site is contributed by 10-17 (GMSGSGKS). Residue 59-62 (DARS) coordinates GTP.

The protein belongs to the RapZ-like family.

In terms of biological role, displays ATPase and GTPase activities. The polypeptide is Nucleotide-binding protein Daci_5422 (Delftia acidovorans (strain DSM 14801 / SPH-1)).